The primary structure comprises 790 residues: Cadherin-18 (790 aa).

The first 24 residues, Met-1 to Gly-24, serve as a signal peptide directing secretion. Positions Thr-25–Arg-53 are excised as a propeptide. Asn-36 carries N-linked (GlcNAc...) asparagine glycosylation. 5 Cadherin domains span residues Gly-54–Phe-159, Thr-160–Phe-268, Pro-269–Phe-383, Ser-384–Pro-486, and Glu-487–Ser-608. Residues Gly-54–Ser-608 are Extracellular-facing. N-linked (GlcNAc...) asparagine glycosylation occurs at Asn-255. N-linked (GlcNAc...) asparagine glycosylation is found at Asn-455 and Asn-536. Residues Ala-609 to Leu-636 form a helical membrane-spanning segment. Residues Arg-637 to Thr-790 are Cytoplasmic-facing. Ser-786 bears the Phosphoserine mark.

It localises to the cell membrane. In terms of biological role, cadherins are calcium-dependent cell adhesion proteins. They preferentially interact with themselves in a homophilic manner in connecting cells; cadherins may thus contribute to the sorting of heterogeneous cell types. The protein is Cadherin-18 (CDH18) of Homo sapiens (Human).